The primary structure comprises 188 residues: dCTP deaminase (188 aa).

DCTP is bound by residues 111–116 (KSTYAR), 135–137 (TLE), Q156, Y170, and Q180. Catalysis depends on E137, which acts as the Proton donor/acceptor.

The protein belongs to the dCTP deaminase family. Homotrimer.

It carries out the reaction dCTP + H2O + H(+) = dUTP + NH4(+). Its pathway is pyrimidine metabolism; dUMP biosynthesis; dUMP from dCTP (dUTP route): step 1/2. Functionally, catalyzes the deamination of dCTP to dUTP. The polypeptide is dCTP deaminase (Paracidovorax citrulli (strain AAC00-1) (Acidovorax citrulli)).